Reading from the N-terminus, the 323-residue chain is Ethanolamine-phosphate cytidylyltransferase (323 aa).

Belongs to the cytidylyltransferase family.

The protein resides in the cytoplasm. Its subcellular location is the nucleus. The catalysed reaction is phosphoethanolamine + CTP + H(+) = CDP-ethanolamine + diphosphate. It functions in the pathway phospholipid metabolism; phosphatidylethanolamine biosynthesis; phosphatidylethanolamine from ethanolamine: step 2/3. Functionally, ethanolamine-phosphate cytidylyltransferase which catalyzes the second step of phosphatidylethanolamine biosynthesis. Involved in the maintenance of plasma membrane and required for proper sporulation. The polypeptide is Ethanolamine-phosphate cytidylyltransferase (Saccharomyces cerevisiae (strain ATCC 204508 / S288c) (Baker's yeast)).